A 473-amino-acid polypeptide reads, in one-letter code: ATP synthase subunit beta (473 aa).

ATP is bound at residue 158-165; sequence GGAGVGKT.

Belongs to the ATPase alpha/beta chains family. F-type ATPases have 2 components, CF(1) - the catalytic core - and CF(0) - the membrane proton channel. CF(1) has five subunits: alpha(3), beta(3), gamma(1), delta(1), epsilon(1). CF(0) has three main subunits: a(1), b(2) and c(9-12). The alpha and beta chains form an alternating ring which encloses part of the gamma chain. CF(1) is attached to CF(0) by a central stalk formed by the gamma and epsilon chains, while a peripheral stalk is formed by the delta and b chains.

It localises to the cell membrane. The enzyme catalyses ATP + H2O + 4 H(+)(in) = ADP + phosphate + 5 H(+)(out). In terms of biological role, produces ATP from ADP in the presence of a proton gradient across the membrane. The catalytic sites are hosted primarily by the beta subunits. The sequence is that of ATP synthase subunit beta from Geobacillus kaustophilus (strain HTA426).